We begin with the raw amino-acid sequence, 85 residues long: Conotoxin Cap15a (85 aa).

The first 23 residues, 1–23 (MEKLTFLILVATVLLTIHVLVQS), serve as a signal peptide directing secretion. A propeptide spanning residues 24–49 (VGDKHLKRRPKQYATKHLSALMRGHR) is cleaved from the precursor. Gln-50 bears the Pyrrolidone carboxylic acid mark.

Belongs to the conotoxin O2 superfamily. Contains 4 disulfide bonds. In terms of tissue distribution, expressed by the venom duct.

Its subcellular location is the secreted. The chain is Conotoxin Cap15a from Conus capitaneus (Captain cone).